We begin with the raw amino-acid sequence, 309 residues long: NADH-cytochrome b5 reductase 2 (309 aa).

The chain crosses the membrane as a helical span at residues I3–F23. Residues S48–N160 enclose the FAD-binding FR-type domain. FAD-binding positions include D140–D170 and K179–L214.

This sequence belongs to the flavoprotein pyridine nucleotide cytochrome reductase family. It depends on FAD as a cofactor.

It is found in the membrane. The catalysed reaction is 2 Fe(III)-[cytochrome b5] + NADH = 2 Fe(II)-[cytochrome b5] + NAD(+) + H(+). Its function is as follows. NADH-cytochrome b5 reductases are involved in desaturation and elongation of fatty acids, cholesterol biosynthesis and drug metabolism. The chain is NADH-cytochrome b5 reductase 2 (cyb5r2) from Danio rerio (Zebrafish).